We begin with the raw amino-acid sequence, 326 residues long: Adenine deaminase (326 aa).

Zn(2+) is bound by residues H14, H16, and H194. E197 (proton donor) is an active-site residue. Residue D275 coordinates Zn(2+). A substrate-binding site is contributed by D276.

The protein belongs to the metallo-dependent hydrolases superfamily. Adenosine and AMP deaminases family. Adenine deaminase type 2 subfamily. The cofactor is Zn(2+).

It catalyses the reaction adenine + H2O + H(+) = hypoxanthine + NH4(+). Its function is as follows. Catalyzes the hydrolytic deamination of adenine to hypoxanthine. Plays an important role in the purine salvage pathway and in nitrogen catabolism. This Crocosphaera subtropica (strain ATCC 51142 / BH68) (Cyanothece sp. (strain ATCC 51142)) protein is Adenine deaminase.